The sequence spans 148 residues: Ribonuclease pancreatic (148 aa).

The N-terminal stretch at 1–25 (MGLEKSLILLPLLVLVFGWVQPSLG) is a signal peptide. The substrate site is built by K32 and R35. The Proton acceptor role is filled by H37. Disulfide bonds link C50/C108, C64/C119, C82/C134, and C89/C96. A glycan (N-linked (GlcNAc...) asparagine) is linked at N58. 65-69 (KPVNT) lines the substrate pocket. The N-linked (GlcNAc...) asparagine glycan is linked to N86. Positions 90 and 109 each coordinate substrate. H143 functions as the Proton donor in the catalytic mechanism.

The protein belongs to the pancreatic ribonuclease family. Monomer. Interacts with and forms tight 1:1 complexes with RNH1. Dimerization of two such complexes may occur. Interaction with RNH1 inhibits this protein. Pancreas.

The protein resides in the secreted. The enzyme catalyses an [RNA] containing cytidine + H2O = an [RNA]-3'-cytidine-3'-phosphate + a 5'-hydroxy-ribonucleotide-3'-[RNA].. It carries out the reaction an [RNA] containing uridine + H2O = an [RNA]-3'-uridine-3'-phosphate + a 5'-hydroxy-ribonucleotide-3'-[RNA].. In terms of biological role, endonuclease that catalyzes the cleavage of RNA on the 3' side of pyrimidine nucleotides. Acts on single-stranded and double-stranded RNA. The protein is Ribonuclease pancreatic (RNASE1) of Myodes glareolus (Bank vole).